Here is a 366-residue protein sequence, read N- to C-terminus: MTKQKLLLNGTFSLILIVACEAQQLPRSHAASSSGPLCEKEAESWGNLLSSERLDAWICSLIGSFMVGLSGIFPLLVIPFETGAALRSEAGSRRLKQLLSFAIGGLLGNVFLHLLPEAWAYTCSAAAGEGQSFQQQKLLGLWVIIGFLTFLALEKIFLEKEEEECPGVGCDYKAPLGKIPNGSGYPPSKVAGKSQRAEKNSTQCNGSSLQSCRTDNRIKISGYLNLLANTIDNFTHGLAVAASFLVSRKVGFLTTMAILLHEIPHEVGDFAILLRAGFDRWSAAKMQLSTALGGIVGACFAICAQSPKGAGETVAWILPFTSGGFLYIALVNVVPDLLEEKNPWNSLQQILLLCTGITVMVLLAHN.

Residues 1 to 5 (MTKQK) are Lumenal-facing. Residues 6 to 26 (LLLNGTFSLILIVACEAQQLP) form a helical membrane-spanning segment. Residues 27 to 57 (RSHAASSSGPLCEKEAESWGNLLSSERLDAW) lie on the Cytoplasmic side of the membrane. Residues 58 to 78 (ICSLIGSFMVGLSGIFPLLVI) traverse the membrane as a helical segment. Over 79–97 (PFETGAALRSEAGSRRLKQ) the chain is Lumenal. The chain crosses the membrane as a helical span at residues 98–118 (LLSFAIGGLLGNVFLHLLPEA). Over 119–137 (WAYTCSAAAGEGQSFQQQK) the chain is Cytoplasmic. The helical transmembrane segment at 138-158 (LLGLWVIIGFLTFLALEKIFL) threads the bilayer. The Lumenal portion of the chain corresponds to 159-225 (EKEEEECPGV…NRIKISGYLN (67 aa)). The segment at 183 to 205 (SGYPPSKVAGKSQRAEKNSTQCN) is disordered. Residues 226–246 (LLANTIDNFTHGLAVAASFLV) traverse the membrane as a helical segment. The Cytoplasmic portion of the chain corresponds to 247-282 (SRKVGFLTTMAILLHEIPHEVGDFAILLRAGFDRWS). An XEXPHE-motif motif is present at residues 261–266 (HEIPHE). A helical transmembrane segment spans residues 283 to 303 (AAKMQLSTALGGIVGACFAIC). At 304–313 (AQSPKGAGET) the chain is on the lumenal side. A helical transmembrane segment spans residues 314–334 (VAWILPFTSGGFLYIALVNVV). Residues 335 to 343 (PDLLEEKNP) are Cytoplasmic-facing. Residues 344 to 364 (WNSLQQILLLCTGITVMVLLA) traverse the membrane as a helical segment. At 365–366 (HN) the chain is on the lumenal side.

Belongs to the ZIP transporter (TC 2.A.5) family. Homodimer.

The protein localises to the golgi apparatus membrane. Its subcellular location is the cytoplasmic vesicle membrane. The protein resides in the endoplasmic reticulum membrane. It carries out the reaction Zn(2+)(in) = Zn(2+)(out). Its function is as follows. Functions as a zinc transporter transporting Zn(2+) from the Golgi apparatus to the cytosol and thus influences the zinc level at least in areas of the cytosol. The sequence is that of Zinc transporter ZIP13 from Gallus gallus (Chicken).